The primary structure comprises 232 residues: RNA chaperone ProQ (232 aa).

Residues 105–182 (EAKARVQAQR…REEQHTPVSD (78 aa)) are disordered. Composition is skewed to basic and acidic residues over residues 117–138 (QQAKKREAAAAAGEKEDAPPRE) and 147–177 (RRKEGAERKPRAQKPVEKAPKTVKAPREEQH).

This sequence belongs to the ProQ family.

The protein resides in the cytoplasm. Its function is as follows. RNA chaperone with significant RNA binding, RNA strand exchange and RNA duplexing activities. May regulate ProP activity through an RNA-based, post-transcriptional mechanism. The sequence is that of RNA chaperone ProQ from Escherichia coli O139:H28 (strain E24377A / ETEC).